Consider the following 263-residue polypeptide: Elongin-A (263 aa).

Disordered stretches follow at residues 112–147 (KLEQ…YCPK) and 170–263 (SATS…PKRI). Polar residues-rich tracts occupy residues 186–206 (RSSS…NTYP) and 214–229 (SFTS…VKTQ). Residues 230–245 (PSSSSSPSISRPTSFP) are compositionally biased toward low complexity. Residues 253–263 (SRFSSQVPKRI) show a composition bias toward polar residues.

This sequence belongs to the ELA1 family. Heterodimer with elc1. Component of a CRL3 E3 ubiquitin ligase complex consisting of a cullin, the linker protein elc1, the substrate receptor pof4/ela1, and the RING protein rbx1. Interacts with skp1.

Its function is as follows. As part of the CRL3 E3 ubiquitin ligase complex; polyubiquitylates monoubiquitylated RNA polymerase II subunit rpb1 to trigger its proteolysis; plays a role in global genomic repair. This is Elongin-A (pof4) from Schizosaccharomyces pombe (strain 972 / ATCC 24843) (Fission yeast).